A 457-amino-acid chain; its full sequence is Zinc finger protein ZIPIC (457 aa).

In terms of domain architecture, ZAD spans 3-84 (CCICQFSVRV…ILELIHSPYM (82 aa)). C2H2-type zinc fingers lie at residues 257–280 (IQCPSCPEKFSSRRAYNVHTKREH), 284–306 (YVCDQCGKTLQSYSGFIGHLQNH), 312–334 (FACPVCPERFSRKFRLKHHMAWH), 340–362 (YQCDVCSKRFVHKVALYKHKMIH), 369–391 (LECQVCGFKTRTKAHLERHMRSH), and 397–419 (FACPVCNKRFSQMYNMKAHLREH). The C2H2-type 7; degenerate zinc-finger motif lies at 430 to 448 (FHCSKCTHTFINEQNYDAH).

In terms of assembly, interacts (via region between the ZAD domain and the first zinc finger domain) with Cp190 (via centrosomal targeting M domain); the interaction is direct. Interacts with pita.

It localises to the nucleus. Its subcellular location is the chromosome. Its function is as follows. Insulator DNA-binding protein. Recruits Cp190 and cooperatively binds to chromatin promoter regions to exert transcriptional regulator and chromatin insulator functions. Chromatin insulators are regulatory elements that establish independent domains of transcriptional activity within eukaryotic genomes. Insulators are proposed to structure the chromatin fiber into independent domains of differing transcriptional potential by promoting the formation of distinct chromatin loops to form topologically associating domains (TADs). Chromatin binding sites often cluster with those of other insulator DNA-binding proteins such as pita, CTCF and BEAF-32, but not Su(Hw). The chain is Zinc finger protein ZIPIC from Drosophila melanogaster (Fruit fly).